The sequence spans 925 residues: Ubp5-interacting protein ftp105 (925 aa).

Residues 650 to 664 are compositionally biased toward low complexity; the sequence is EGSSDFESKSSDNTS. The segment at 650–671 is disordered; it reads EGSSDFESKSSDNTSLDGTPLQ.

Belongs to the hid-1 family. In terms of assembly, interacts with ubp5.

The protein localises to the cytoplasm. Its subcellular location is the golgi apparatus. Required for the localization of ubp5 to the Golgi apparatus. Involved in detoxification of cadmium ion. This chain is Ubp5-interacting protein ftp105 (ftp105), found in Schizosaccharomyces pombe (strain 972 / ATCC 24843) (Fission yeast).